The chain runs to 98 residues: Small ribosomal subunit protein bS20 (98 aa).

The protein belongs to the bacterial ribosomal protein bS20 family.

Its function is as follows. Binds directly to 16S ribosomal RNA. The polypeptide is Small ribosomal subunit protein bS20 (Synechococcus elongatus (strain ATCC 33912 / PCC 7942 / FACHB-805) (Anacystis nidulans R2)).